Consider the following 254-residue polypeptide: D-aminoacyl-tRNA deacylase (254 aa).

This sequence belongs to the DtdA deacylase family. Monomer. Zn(2+) is required as a cofactor.

The enzyme catalyses a D-aminoacyl-tRNA + H2O = a tRNA + a D-alpha-amino acid + H(+). It carries out the reaction glycyl-tRNA(Ala) + H2O = tRNA(Ala) + glycine + H(+). D-aminoacyl-tRNA deacylase with broad substrate specificity. By recycling D-aminoacyl-tRNA to D-amino acids and free tRNA molecules, this enzyme counteracts the toxicity associated with the formation of D-aminoacyl-tRNA entities in vivo. This Methanococcus vannielii (strain ATCC 35089 / DSM 1224 / JCM 13029 / OCM 148 / SB) protein is D-aminoacyl-tRNA deacylase.